The sequence spans 700 residues: Elongation factor G (700 aa).

A tr-type G domain is found at 10–286 (NKVRNIGIMA…AVIDYLPNPL (277 aa)). Residues 19–26 (AHIDAGKT), 83–87 (DTPGH), and 137–140 (NKMD) contribute to the GTP site.

It belongs to the TRAFAC class translation factor GTPase superfamily. Classic translation factor GTPase family. EF-G/EF-2 subfamily.

Its subcellular location is the cytoplasm. In terms of biological role, catalyzes the GTP-dependent ribosomal translocation step during translation elongation. During this step, the ribosome changes from the pre-translocational (PRE) to the post-translocational (POST) state as the newly formed A-site-bound peptidyl-tRNA and P-site-bound deacylated tRNA move to the P and E sites, respectively. Catalyzes the coordinated movement of the two tRNA molecules, the mRNA and conformational changes in the ribosome. The protein is Elongation factor G of Rhodococcus jostii (strain RHA1).